The sequence spans 166 residues: Small ribosomal subunit protein uS5 (166 aa).

In terms of domain architecture, S5 DRBM spans 11–74 (LQEKLISVNR…DKARKNMIII (64 aa)).

Belongs to the universal ribosomal protein uS5 family. Part of the 30S ribosomal subunit. Contacts proteins S4 and S8.

Its function is as follows. With S4 and S12 plays an important role in translational accuracy. Located at the back of the 30S subunit body where it stabilizes the conformation of the head with respect to the body. In Wigglesworthia glossinidia brevipalpis, this protein is Small ribosomal subunit protein uS5.